A 206-amino-acid polypeptide reads, in one-letter code: LexA repressor (206 aa).

Positions 29-49 (VREICEAVGLRSTSTVHGHLA) form a DNA-binding region, H-T-H motif. Active-site for autocatalytic cleavage activity residues include serine 130 and lysine 167.

The protein belongs to the peptidase S24 family. As to quaternary structure, homodimer.

The enzyme catalyses Hydrolysis of Ala-|-Gly bond in repressor LexA.. Its function is as follows. Represses a number of genes involved in the response to DNA damage (SOS response), including recA and lexA. In the presence of single-stranded DNA, RecA interacts with LexA causing an autocatalytic cleavage which disrupts the DNA-binding part of LexA, leading to derepression of the SOS regulon and eventually DNA repair. This chain is LexA repressor, found in Alkaliphilus oremlandii (strain OhILAs) (Clostridium oremlandii (strain OhILAs)).